A 168-amino-acid polypeptide reads, in one-letter code: uncharacterized protein (168 aa).

A run of 2 helical transmembrane segments spans residues isoleucine 4–glutamate 24 and isoleucine 94–tryptophan 114.

It to A.aeolicus aq_1446.

Its subcellular location is the cell membrane. This is an uncharacterized protein from Aquifex aeolicus (strain VF5).